The primary structure comprises 201 residues: Putative 3-methyladenine DNA glycosylase (201 aa).

Belongs to the DNA glycosylase MPG family.

The chain is Putative 3-methyladenine DNA glycosylase from Nitrosococcus oceani (strain ATCC 19707 / BCRC 17464 / JCM 30415 / NCIMB 11848 / C-107).